The following is a 270-amino-acid chain: uncharacterized protein (270 aa).

An N-terminal signal peptide occupies residues 1 to 22 (MEYIKKIALYMSVLLLIIFIGG). Cys-23 carries the N-palmitoyl cysteine lipid modification. Cys-23 is lipidated: S-diacylglycerol cysteine.

Belongs to the staphylococcal tandem lipoprotein family.

The protein localises to the cell membrane. This is an uncharacterized protein from Staphylococcus aureus (strain MW2).